We begin with the raw amino-acid sequence, 81 residues long: UPF0410 protein YwzA (81 aa).

Helical transmembrane passes span 1 to 21, 27 to 47, and 56 to 76; these read MSFL…SLFV, GGII…HGLL, and GFAI…VSLL.

This sequence belongs to the UPF0410 family.

It localises to the cell membrane. The chain is UPF0410 protein YwzA (ywzA) from Bacillus subtilis (strain 168).